The primary structure comprises 143 residues: Large ribosomal subunit protein uL15 (143 aa).

Positions M1–L57 are disordered. Residues R21–A31 are compositionally biased toward gly residues.

Belongs to the universal ribosomal protein uL15 family. Part of the 50S ribosomal subunit.

Functionally, binds to the 23S rRNA. The protein is Large ribosomal subunit protein uL15 of Ralstonia nicotianae (strain ATCC BAA-1114 / GMI1000) (Ralstonia solanacearum).